A 191-amino-acid chain; its full sequence is Cytochrome c oxidase assembly protein CtaG (191 aa).

The Cytoplasmic portion of the chain corresponds to 1-9 (MALNGPQKT). Residues 10-30 (VVQLVSVVVVMGGLAWASVPF) form a helical; Signal-anchor for type II membrane protein membrane-spanning segment. The Periplasmic portion of the chain corresponds to 31 to 191 (YDWFCRVTGF…LDAGEKTNTN (161 aa)).

This sequence belongs to the COX11/CtaG family.

It is found in the cell inner membrane. Exerts its effect at some terminal stage of cytochrome c oxidase synthesis, probably by being involved in the insertion of the copper B into subunit I. The protein is Cytochrome c oxidase assembly protein CtaG of Ruegeria pomeroyi (strain ATCC 700808 / DSM 15171 / DSS-3) (Silicibacter pomeroyi).